Reading from the N-terminus, the 297-residue chain is Probable terminal-alkyne amino-acid exporter (297 aa).

Helical transmembrane passes span Ala6–Val26, Gly32–Ala52, Leu65–Trp85, Ala95–Gly115, Ile123–Ala143, Trp150–Leu170, Val178–Val198, Thr212–Ala232, and Val249–Gly269. 2 consecutive EamA domains span residues Ala6 to Ala137 and Trp150 to Asn281.

It belongs to the EamA transporter family.

It is found in the cell membrane. In terms of biological role, probably involved in the export of terminal alkyne-containing amino acids, namely L-propargylglycine (Pra) and L-beta-ethynylserine, that are antibiotics synthesized by enzymes encoded in the same gene cluster. The sequence is that of Probable terminal-alkyne amino-acid exporter from Streptantibioticus cattleyicolor (strain ATCC 35852 / DSM 46488 / JCM 4925 / NBRC 14057 / NRRL 8057) (Streptomyces cattleya).